The primary structure comprises 94 residues: CRISPR-associated endoribonuclease Cas2 (94 aa).

Position 11 (aspartate 11) interacts with Mg(2+).

It belongs to the CRISPR-associated endoribonuclease Cas2 protein family. Homodimer, forms a heterotetramer with a Cas1 homodimer. Mg(2+) serves as cofactor.

Functionally, CRISPR (clustered regularly interspaced short palindromic repeat), is an adaptive immune system that provides protection against mobile genetic elements (viruses, transposable elements and conjugative plasmids). CRISPR clusters contain sequences complementary to antecedent mobile elements and target invading nucleic acids. CRISPR clusters are transcribed and processed into CRISPR RNA (crRNA). Functions as a ssRNA-specific endoribonuclease. Involved in the integration of spacer DNA into the CRISPR cassette. The polypeptide is CRISPR-associated endoribonuclease Cas2 (Allochromatium vinosum (strain ATCC 17899 / DSM 180 / NBRC 103801 / NCIMB 10441 / D) (Chromatium vinosum)).